A 425-amino-acid chain; its full sequence is Histidine--tRNA ligase (425 aa).

Belongs to the class-II aminoacyl-tRNA synthetase family. In terms of assembly, homodimer.

It localises to the cytoplasm. The catalysed reaction is tRNA(His) + L-histidine + ATP = L-histidyl-tRNA(His) + AMP + diphosphate + H(+). The polypeptide is Histidine--tRNA ligase (Aeromonas salmonicida (strain A449)).